A 578-amino-acid chain; its full sequence is Aspartate--tRNA ligase (578 aa).

Glutamate 169 contacts L-aspartate. Positions 191–194 are aspartate; it reads QTFK. Arginine 213 provides a ligand contact to L-aspartate. ATP contacts are provided by residues 213–215 and glutamine 222; that span reads RDE. Histidine 440 provides a ligand contact to L-aspartate. ATP is bound at residue glutamate 474. Arginine 481 lines the L-aspartate pocket. Residue 526–529 coordinates ATP; it reads GLDR.

The protein belongs to the class-II aminoacyl-tRNA synthetase family. Type 1 subfamily. Homodimer.

It is found in the cytoplasm. It carries out the reaction tRNA(Asp) + L-aspartate + ATP = L-aspartyl-tRNA(Asp) + AMP + diphosphate. Functionally, catalyzes the attachment of L-aspartate to tRNA(Asp) in a two-step reaction: L-aspartate is first activated by ATP to form Asp-AMP and then transferred to the acceptor end of tRNA(Asp). The polypeptide is Aspartate--tRNA ligase (Ureaplasma parvum serovar 3 (strain ATCC 700970)).